We begin with the raw amino-acid sequence, 526 residues long: Acetyl-CoA hydrolase (526 aa).

Threonine 2 is modified (N-acetylthreonine). 277–281 (GIGNI) is a binding site for CoA. The active-site 5-glutamyl coenzyme A thioester intermediate is glutamate 302. Residue serine 350 is modified to Phosphoserine. Positions 392 and 396 each coordinate CoA.

It belongs to the acetyl-CoA hydrolase/transferase family. In terms of assembly, monomer. Glycosylated; contains mannose.

It is found in the cytoplasm. The catalysed reaction is acetyl-CoA + H2O = acetate + CoA + H(+). Functionally, presumably involved in regulating the intracellular acetyl-CoA pool for fatty acid and cholesterol synthesis and fatty acid oxidation. It may be involved in overall regulation of acetylation during melatonin synthesis. The sequence is that of Acetyl-CoA hydrolase (ACH1) from Saccharomyces cerevisiae (strain ATCC 204508 / S288c) (Baker's yeast).